Consider the following 211-residue polypeptide: Large ribosomal subunit protein uL3 (211 aa).

Residues 122–157 form a disordered region; it reads NQKRNNFGRGPMSHGSKNHRAPGSIGAGTTPGRVYP.

Belongs to the universal ribosomal protein uL3 family. Part of the 50S ribosomal subunit. Forms a cluster with proteins L14 and L19.

In terms of biological role, one of the primary rRNA binding proteins, it binds directly near the 3'-end of the 23S rRNA, where it nucleates assembly of the 50S subunit. The protein is Large ribosomal subunit protein uL3 of Trichormus variabilis (strain ATCC 29413 / PCC 7937) (Anabaena variabilis).